A 181-amino-acid polypeptide reads, in one-letter code: Large ribosomal subunit protein uL10 (181 aa).

Belongs to the universal ribosomal protein uL10 family. As to quaternary structure, part of the ribosomal stalk of the 50S ribosomal subunit. The N-terminus interacts with L11 and the large rRNA to form the base of the stalk. The C-terminus forms an elongated spine to which L12 dimers bind in a sequential fashion forming a multimeric L10(L12)X complex.

In terms of biological role, forms part of the ribosomal stalk, playing a central role in the interaction of the ribosome with GTP-bound translation factors. The chain is Large ribosomal subunit protein uL10 from Amoebophilus asiaticus (strain 5a2).